Here is a 525-residue protein sequence, read N- to C-terminus: MKVLTTALLLVTLQCSHALSPTNCDASKPLAEKVLDLINKGRRSGYTFQLLRVSDAHLDRVETATIYYLVLDVVESDCWVLSTKAQDECLPAMRTSEVVIGQCKVIATRYSNESQDLSVNGYNCTMRSVSSAYINTKDSPVLVDSFEDSEPYRKLARKALDKYKAENGDFASFRVERAERVIRMRGGERTSYFIEFSVRNCSTQHFPRHPPVFGLCRVVLTYSTEASDLETPEYTDLICEVFNTEDLKNRSDMKPHRGHEHPHCDKHLCKLSGPRDHHHTHKTHEIGCPPPPEGKDNSDRPPLQEGALPQMLPGHSGPSGTNRSHRPPHNHSCNEHPCHGQHPHGHHPHGQHPHGHHPHGQHPHGHHPHGQHPHGHHPHGQHPHGHHPHGHHPHGDHPHGHHPHGHDFLDYGPCDPPSNSQELKGQYHRGHGPPHGHSRKRGPGKGLFPFHQRQIGYVYRLPPLNVGEVLTPPEANFPIFSLPNCNRPPQPEIRPFPQTASKSCPGKFEGKFPQVSNFFEHTPPK.

The N-terminal stretch at 1–18 is a signal peptide; that stretch reads MKVLTTALLLVTLQCSHA. In terms of domain architecture, Cystatin 1 spans 19 to 122; sequence LSPTNCDASK…ESQDLSVNGY (104 aa). Disulfide bonds link C24/C504, C78/C89, C103/C124, C201/C414, and C216/C239. The segment at 41 to 84 is interaction with ATP5F1A; the sequence is GRRSGYTFQLLRVSDAHLDRVETATIYYLVLDVVESDCWVLSTK. N-linked (GlcNAc...) asparagine glycans are attached at residues N112 and N123. Positions 135 to 240 constitute a Cystatin 2 domain; it reads NTKDSPVLVD…TPEYTDLICE (106 aa). The residue at position 145 (S145) is a Phosphoserine. A glycan (N-linked (GlcNAc...) asparagine) is linked at N200. The segment at 275 to 445 is disordered; it reads RDHHHTHKTH…GHSRKRGPGK (171 aa). N-linked (GlcNAc...) asparagine glycans are attached at residues N322 and N330. 2 stretches are compositionally biased toward basic residues: residues 339–392 and 426–443; these read HGQH…HGHH and QYHR…KRGP. S438 bears the Phosphoserine mark.

In terms of assembly, interacts with THBS1 (via the TSP type I repeats); the interaction blocks the antiangiogenic effect of THBS1 with CD36. Interacts with HPSE; the interaction is enhanced at acidic pH, partially inhibits binding of HPSE to cell surface receptors and modulates its enzymatic activity. Interacts (via the HRR domain) with TMP1; the interaction partially mediates the antiangiogenic properties of HRG. Interacts with kappa and lambda light chains of IgG molecules. Interacts with ATP5F1A; the interaction occurs on the surface of T-cells and alters their cell morphology in concert with CONA. Binds IgG molecules containing kappa and lambda light chains and inhibits the formation of insoluble immunoglobulin complexes. Interacts with F12; the interaction, which is enhanced in the presence of zinc ions and inhibited by heparin-binding to HRG, inhibits factor XII autoactivation and contact-initiated coagulation. Interacts with PLG (via its Kringle domains); the interaction tethers PLG to the cell surface and enhances its activation. Interacts (via the HRR domain) with TPM1; the interaction appears to contribute to the antiangiogenic properties of the HRR domain. Interacts with THBS2; the interaction blocks the antiangiogenic effect of THBS2 with CD36. N-glycosylated. In terms of processing, proteolytic cleavage produces several HRG fragments which are mostly disulfide-linked and, therefore, not released. Cleavage by plasmin is inhibited in the presence of heparin, zinc ions or in an acidic environment. Cleavage reduces binding of HRG to heparan sulfate, but enhances the ability of HRG to bind and tether plasminogen to the cell surface. On platelet activation, releases a 33 kDa antiangiogenic peptide which encompasses the HRR. Also cleaved in the C-terminal by plasmin. As to expression, expressed in liver, blood plasma, serum and in platelets. Also present in fibrin clots, wound fluid from acute wounds and chronic leg ulcers.

It is found in the secreted. Its function is as follows. Plasma glycoprotein that binds a number of ligands such as heme, heparin, heparan sulfate, thrombospondin, plasminogen, and divalent metal ions. Inhibits rosette formation. Acts as an adapter protein and implicated in regulating many processes such as immune complex and pathogen clearance, cell adhesion, angiogenesis, coagulation and fibrinolysis. Mediates clearance of necrotic cells through enhancing the phagocytosis of necrotic cells in a heparan sulfate-dependent pathway. This process can be regulated by the presence of certain HRG ligands such as heparin and zinc ions. Binds to IgG subclasses of immunoglobins containing kappa and lambda light chains with different affinities regulating their clearance and inhibiting the formation of insoluble immune complexes. Tethers plasminogen to the cell surface. Binds T-cells and alters the cell morphology. Modulates angiogenesis by blocking the CD6-mediated antiangiongenic effect of thrombospondins, THBS1 and THBS2. The sequence is that of Histidine-rich glycoprotein (Hrg) from Rattus norvegicus (Rat).